Reading from the N-terminus, the 428-residue chain is Dihydroorotase (428 aa).

His-59 and His-61 together coordinate Zn(2+). Substrate-binding positions include His-61 to Arg-63 and Asn-93. Residues Asp-151, His-178, and His-231 each contribute to the Zn(2+) site. Asn-277 contacts substrate. Asp-304 contacts Zn(2+). Residue Asp-304 is part of the active site. Residues His-308 and Phe-322–Gly-323 contribute to the substrate site.

This sequence belongs to the metallo-dependent hydrolases superfamily. DHOase family. Class I DHOase subfamily. The cofactor is Zn(2+).

The catalysed reaction is (S)-dihydroorotate + H2O = N-carbamoyl-L-aspartate + H(+). The protein operates within pyrimidine metabolism; UMP biosynthesis via de novo pathway; (S)-dihydroorotate from bicarbonate: step 3/3. Catalyzes the reversible cyclization of carbamoyl aspartate to dihydroorotate. The polypeptide is Dihydroorotase (Bacillus cereus (strain ZK / E33L)).